The primary structure comprises 368 residues: MGSRTGSREEHSLQFLNLTKMTTTTASNLPWVEKYRPSKLDELVAHEQIVKTLTKFIENRTLPHLLFYGPPGTGKTTTVLAAARQMYSPTKMASMVLELNASDERGIDVVRNTIVNFAQTKGLQAFSTSSNTGTVPFKLVILDEADAMTKDAQNALRRVIEKYTDNVRFCIICNYLASIVPAIQSRCTRFRFAPLDQKLIVPRLEYIVETEQLKMTPDGKDALLIVSKGDMRTVINTLQSTAMSFDTVSENTVYQCIGQPTPKEMKEVVKTLLNDPSKKCMNTIQTKLFENGYALQDVITHLHDFVFTLDIPDEAMSAIITGLGEVEENLSTGCSNETQLAAVVAAFFEAKRLCVKEMKNLEIEDMEF.

69–76 (GPPGTGKT) contributes to the ATP binding site.

This sequence belongs to the activator 1 small subunits family. As to quaternary structure, heteropentamer of various rfc subunits that forms a complex (RFC) with PCNA in the presence of ATP.

The protein resides in the nucleus. The elongation of primed DNA templates by DNA polymerase delta and epsilon requires the action of the accessory proteins proliferating cell nuclear antigen (PCNA) and activator 1. The polypeptide is Probable replication factor C subunit 5 (Caenorhabditis elegans).